The chain runs to 356 residues: Phospho-2-dehydro-3-deoxyheptonate aldolase, Tyr-sensitive (356 aa).

The protein belongs to the class-I DAHP synthase family.

The enzyme catalyses D-erythrose 4-phosphate + phosphoenolpyruvate + H2O = 7-phospho-2-dehydro-3-deoxy-D-arabino-heptonate + phosphate. It functions in the pathway metabolic intermediate biosynthesis; chorismate biosynthesis; chorismate from D-erythrose 4-phosphate and phosphoenolpyruvate: step 1/7. Its function is as follows. Stereospecific condensation of phosphoenolpyruvate (PEP) and D-erythrose-4-phosphate (E4P) giving rise to 3-deoxy-D-arabino-heptulosonate-7-phosphate (DAHP). This chain is Phospho-2-dehydro-3-deoxyheptonate aldolase, Tyr-sensitive (aroF), found in Salmonella typhi.